A 355-amino-acid polypeptide reads, in one-letter code: Epoxyqueuosine reductase (355 aa).

The active-site Proton donor is the aspartate 143. The region spanning leucine 185–arginine 217 is the 4Fe-4S ferredoxin-type domain. [4Fe-4S] cluster-binding residues include cysteine 197, cysteine 200, cysteine 203, cysteine 207, cysteine 223, cysteine 250, cysteine 253, and cysteine 257.

The protein belongs to the QueG family. Monomer. Requires cob(II)alamin as cofactor. [4Fe-4S] cluster serves as cofactor.

It localises to the cytoplasm. The catalysed reaction is epoxyqueuosine(34) in tRNA + AH2 = queuosine(34) in tRNA + A + H2O. It participates in tRNA modification; tRNA-queuosine biosynthesis. In terms of biological role, catalyzes the conversion of epoxyqueuosine (oQ) to queuosine (Q), which is a hypermodified base found in the wobble positions of tRNA(Asp), tRNA(Asn), tRNA(His) and tRNA(Tyr). The polypeptide is Epoxyqueuosine reductase (Xanthomonas campestris pv. campestris (strain ATCC 33913 / DSM 3586 / NCPPB 528 / LMG 568 / P 25)).